We begin with the raw amino-acid sequence, 317 residues long: MPMQEPQRRLLGPFNSTRTGAPHLELSANQTGPWCLHVSIPDGLFLSLGLVSLVENVLVVISIAKNQNLHSPMYYFICCLALSDLLVSVSIVLETTLILVLEAGALATRVTVVQQLDNVIDVLICASMVSSLCFLGAIAVDRYISIFYALRYHSIVTLPRARWAIVAIWVASISSSTLFVAYYNHTAVLLCLVTFFLATLALMVVLYVHMLARAHQHAQAIAQLHKRQHLVHQGFRLKGAATLTILLGIFFLCWGPFFLYLTLIVLCPKHPTCGCFFKNLNLFLALIIFNSIVDPLIYAFRSQELRMTLKEVLLCSW.

Topologically, residues 1–37 (MPMQEPQRRLLGPFNSTRTGAPHLELSANQTGPWCLH) are extracellular. Residues Asn15 and Asn29 are each glycosylated (N-linked (GlcNAc...) asparagine). A helical transmembrane segment spans residues 38–63 (VSIPDGLFLSLGLVSLVENVLVVISI). Over 64–72 (AKNQNLHSP) the chain is Cytoplasmic. Residues 73-93 (MYYFICCLALSDLLVSVSIVL) form a helical membrane-spanning segment. Topologically, residues 94-118 (ETTLILVLEAGALATRVTVVQQLDN) are extracellular. A helical transmembrane segment spans residues 119–140 (VIDVLICASMVSSLCFLGAIAV). Topologically, residues 141–163 (DRYISIFYALRYHSIVTLPRARW) are cytoplasmic. The helical transmembrane segment at 164–183 (AIVAIWVASISSSTLFVAYY) threads the bilayer. Topologically, residues 184–191 (NHTAVLLC) are extracellular. A helical transmembrane segment spans residues 192 to 211 (LVTFFLATLALMVVLYVHML). At 212–240 (ARAHQHAQAIAQLHKRQHLVHQGFRLKGA) the chain is on the cytoplasmic side. Residues 241 to 266 (ATLTILLGIFFLCWGPFFLYLTLIVL) form a helical membrane-spanning segment. Topologically, residues 267–279 (CPKHPTCGCFFKN) are extracellular. Residues 280–300 (LNLFLALIIFNSIVDPLIYAF) form a helical membrane-spanning segment. The Cytoplasmic portion of the chain corresponds to 301–317 (RSQELRMTLKEVLLCSW). Cys315 carries the S-palmitoyl cysteine lipid modification.

It belongs to the G-protein coupled receptor 1 family. As to quaternary structure, interacts with MGRN1, but does not undergo MGRN1-mediated ubiquitination; this interaction competes with GNAS-binding and thus inhibits agonist-induced cAMP production. Interacts with OPN3; the interaction results in a decrease in MC1R-mediated cAMP signaling and ultimately a decrease in melanin production in melanocytes.

It is found in the cell membrane. Receptor for MSH (alpha, beta and gamma) and ACTH. The activity of this receptor is mediated by G proteins which activate adenylate cyclase. Mediates melanogenesis, the production of eumelanin (black/brown) and phaeomelanin (red/yellow), via regulation of cAMP signaling in melanocytes. This is Melanocyte-stimulating hormone receptor (MC1R) from Chaetodipus penicillatus (Desert pocket mouse).